We begin with the raw amino-acid sequence, 472 residues long: Argininosuccinate lyase (472 aa).

Belongs to the lyase 1 family. Argininosuccinate lyase subfamily.

The protein resides in the cytoplasm. It catalyses the reaction 2-(N(omega)-L-arginino)succinate = fumarate + L-arginine. It functions in the pathway amino-acid biosynthesis; L-arginine biosynthesis; L-arginine from L-ornithine and carbamoyl phosphate: step 3/3. In Rhodococcus opacus (strain B4), this protein is Argininosuccinate lyase.